A 44-amino-acid polypeptide reads, in one-letter code: Defensin-like peptide (44 aa).

Cystine bridges form between Cys-7-Cys-32, Cys-18-Cys-40, and Cys-22-Cys-42.

Hemolymph.

It is found in the secreted. Its function is as follows. Has antibacterial activity against the Gram-positive bacterium S.lutea (MIC=1.9 uM). Lacks antibacterial activity against the Gram-positive bacteria L.monocytogenes and M.luteus, and the Gram-negative bacteria E.coli D31, E.coli ATCC 25922, and S.typhimurium. Has antifungal activity against A.niger (MIC=2.9 uM), C.albicans (MIC=2.9 uM), C.fructus (MIC=2.9 uM), C.wickerhamii (MIC=2.9 uM), P.pastoris (MIC=2.9 uM), P.stiptis (MIC=2.9 uM), P.tannophilus (MIC=2.9 uM), T.harzianum (MIC=2.9 uM), and Z.marxianus (MIC=2.9 uM), but lacks antifungal activity against C.albidus, F.oxysporum, and S.cerevisiae. The sequence is that of Defensin-like peptide from Galleria mellonella (Greater wax moth).